A 122-amino-acid polypeptide reads, in one-letter code: Small ribosomal subunit protein uS13 (122 aa).

Residues 97–122 (PVRGQRTHTNAKTRKGRSRLPIAGKK) form a disordered region.

It belongs to the universal ribosomal protein uS13 family. Part of the 30S ribosomal subunit. Forms a loose heterodimer with protein S19. Forms two bridges to the 50S subunit in the 70S ribosome.

In terms of biological role, located at the top of the head of the 30S subunit, it contacts several helices of the 16S rRNA. In the 70S ribosome it contacts the 23S rRNA (bridge B1a) and protein L5 of the 50S subunit (bridge B1b), connecting the 2 subunits; these bridges are implicated in subunit movement. Contacts the tRNAs in the A and P-sites. This chain is Small ribosomal subunit protein uS13, found in Wolbachia pipientis wMel.